The chain runs to 438 residues: chitinase-like effector (438 aa).

Residues 1–23 form the signal peptide; the sequence is MFTPLSSVTALLALSSAFLGAQA. The region spanning 54–437 is the GH18 domain; it reads FIAKGYYTGW…DAIRSGAGLS (384 aa). Tryptophan 416 is a chitin binding site.

This sequence belongs to the glycosyl hydrolase 18 family.

The protein resides in the secreted. Catalytically impaired chitinase that binds efficiently to chitin, but not to chitosan, xylan, or cellulose. Despite the lack of chitinolytic activity, retains substrate binding specificity and acts as an effector to prevent chitin-triggered immunity by sequestering immunogenic chitin fragments. Does not function in the protection of fungal cell wall against plant hydrolytic enzymes. The polypeptide is chitinase-like effector (Moniliophthora perniciosa (Witches'-broom disease fungus)).